Consider the following 373-residue polypeptide: Chloroperoxidase (373 aa).

Residues 1–20 (MFSKVLPFVGAVAALPHSVR) form the signal peptide. Gln21 bears the Pyrrolidone carboxylic acid mark. Asn33 carries N-linked (GlcNAc...) asparagine glycosylation. Cys50 lines the heme pocket. Cys100 and Cys108 are disulfide-bonded. The N-linked (GlcNAc...) asparagine glycan is linked to Asn114. The Mn(2+) site is built by Glu125, His126, and Ser129. Residue Glu204 is part of the active site. Asn237 carries an N-linked (GlcNAc...) asparagine glycan. O-linked (Man) threonine glycosylation occurs at Thr259. 4 O-linked (Man) serine glycosylation sites follow: Ser260, Ser262, Ser263, and Ser269. Thr271 carries an O-linked (Man) threonine glycan. A glycan (O-linked (Man) serine) is linked at Ser272. O-linked (Man) threonine glycosylation occurs at Thr273. O-linked (Man...) threonine glycans are attached at residues Thr296, Thr304, and Thr314. Positions 322-373 (EAAPAATTSMAVFKNPYLEAIGTQDIKNQQAYVSSKAAAMASAMAANKARNL) are excised as a propeptide.

It belongs to the chloroperoxidase family. The cofactor is heme b. Mn(2+) is required as a cofactor. N- and O-glycosylated.

It carries out the reaction RH + Cl(-) + H2O2 = RCl + 2 H2O.. Functionally, catalyzes peroxidative halogenations involved in the biosynthesis of clardariomycin (2,2-dichloro-1,3-cyclo-pentenedione). The enzyme also has potent catalase activity and in the absence of halide ion, acts as a peroxidase similar to plant peroxidases. The chain is Chloroperoxidase (CPO) from Leptoxyphium fumago (Caldariomyces fumago).